The chain runs to 66 residues: Large ribosomal subunit protein bL33c (66 aa).

It belongs to the bacterial ribosomal protein bL33 family.

The protein resides in the plastid. The protein localises to the chloroplast. This is Large ribosomal subunit protein bL33c from Adiantum capillus-veneris (Maidenhair fern).